The sequence spans 349 residues: uncharacterized protein (349 aa).

Residues 1–16 (MLFKISFLALIASALA) form the signal peptide. Topologically, residues 17–326 (MSINSPTNGD…SSSSSSSAAS (310 aa)) are lumenal. Disordered stretches follow at residues 115–190 (ASSS…SSYR) and 243–322 (TNGT…SSSS). Composition is skewed to low complexity over residues 116–176 (SSSS…SSRT), 243–278 (TNGT…TASG), and 289–322 (STND…SSSS). Residues 327–347 (LVSQPVGISAVIAFFAVALSL) traverse the membrane as a helical segment. The Cytoplasmic portion of the chain corresponds to 348–349 (TL).

The protein localises to the endoplasmic reticulum membrane. This is an uncharacterized protein from Schizosaccharomyces pombe (strain 972 / ATCC 24843) (Fission yeast).